The chain runs to 172 residues: Adenine phosphoribosyltransferase (172 aa).

Belongs to the purine/pyrimidine phosphoribosyltransferase family. As to quaternary structure, homodimer.

The protein resides in the cytoplasm. It catalyses the reaction AMP + diphosphate = 5-phospho-alpha-D-ribose 1-diphosphate + adenine. It functions in the pathway purine metabolism; AMP biosynthesis via salvage pathway; AMP from adenine: step 1/1. In terms of biological role, catalyzes a salvage reaction resulting in the formation of AMP, that is energically less costly than de novo synthesis. This chain is Adenine phosphoribosyltransferase, found in Clostridium botulinum (strain Eklund 17B / Type B).